A 46-amino-acid chain; its full sequence is DNA-directed RNA polymerases I, II, and III subunit rpabc4 (46 aa).

C7, C10, C24, and C27 together coordinate Zn(2+). The C4-type zinc finger occupies 7–27 (CGECGAEHEIKPKEPVKCKDC).

This sequence belongs to the archaeal Rpo12/eukaryotic RPC10 RNA polymerase subunit family. In terms of assembly, component of the RNA polymerase I (Pol I), RNA polymerase II (Pol II) and RNA polymerase III (Pol III) complexes consisting of at least 13, 12 and 17 subunits, respectively.

It localises to the nucleus. Functionally, DNA-dependent RNA polymerase catalyzes the transcription of DNA into RNA using the four ribonucleoside triphosphates as substrates. Common component of RNA polymerases I, II and III which synthesize ribosomal RNA precursors, mRNA precursors and many functional non-coding RNAs, and a small RNAs, such as 5S rRNA and tRNAs, respectively. The protein is DNA-directed RNA polymerases I, II, and III subunit rpabc4 (polr2k) of Dictyostelium discoideum (Social amoeba).